A 134-amino-acid polypeptide reads, in one-letter code: Ribonuclease P protein component (134 aa).

The protein belongs to the RnpA family. In terms of assembly, consists of a catalytic RNA component (M1 or rnpB) and a protein subunit.

It catalyses the reaction Endonucleolytic cleavage of RNA, removing 5'-extranucleotides from tRNA precursor.. Its function is as follows. RNaseP catalyzes the removal of the 5'-leader sequence from pre-tRNA to produce the mature 5'-terminus. It can also cleave other RNA substrates such as 4.5S RNA. The protein component plays an auxiliary but essential role in vivo by binding to the 5'-leader sequence and broadening the substrate specificity of the ribozyme. This is Ribonuclease P protein component from Pseudomonas putida (strain GB-1).